The chain runs to 243 residues: MAAAAGPSSSVKESLPPALGSTSQPPPVFDGTTRLYICYFCPFAQRAWVTRNLKGLQDKMELVAIDLQDKPAWYKDKVYAQGTVPSLEHDSEVRGESLDLIRYIDSNFDGPALLPEDAAKRQFADELFASANAFTKALYSPLLSHAAVSDEVVAALDKLEADLSKFDDGPFFLGQFSLADVAYVTILERVQIYYSHLRNYDIAQGRPNLQEFIDEMNKIEAYAQTKNDPLFLLDLAKSHLKIA.

Residues 1–26 (MAAAAGPSSSVKESLPPALGSTSQPP) form a disordered region. The GST N-terminal domain maps to 31–112 (GTTRLYICYF…YIDSNFDGPA (82 aa)). Residues Lys-70, Val-84, and 96–97 (ES) each bind glutathione. The GST C-terminal domain maps to 109-240 (DGPALLPEDA…FLLDLAKSHL (132 aa)).

It belongs to the GST superfamily. HSP26 family. As to expression, leaves and roots. It is more strongly induced in the leaves relative to the roots.

This Zea mays (Maize) protein is Protein IN2-1 (IN2-1).